The chain runs to 56 residues: UPF0391 membrane protein Noc_0482 (56 aa).

Helical transmembrane passes span M1–T21 and H29–G49.

This sequence belongs to the UPF0391 family.

It localises to the cell membrane. In Nitrosococcus oceani (strain ATCC 19707 / BCRC 17464 / JCM 30415 / NCIMB 11848 / C-107), this protein is UPF0391 membrane protein Noc_0482.